The sequence spans 98 residues: U11-barytoxin-Tl1b (98 aa).

An N-terminal signal peptide occupies residues 1–21 (MKTLVLVAVLGLASLYLLSYA). A propeptide spanning residues 22 to 50 (SEVQQLSRDEEEFRALVASFGGLFDTEER) is cleaved from the precursor. Cystine bridges form between cysteine 57-cysteine 71, cysteine 64-cysteine 76, and cysteine 70-cysteine 89.

It belongs to the neurotoxin 10 (Hwtx-1) family. 25 (ICK4) subfamily. As to expression, expressed by the venom gland.

It localises to the secreted. Ion channel inhibitor. This chain is U11-barytoxin-Tl1b, found in Trittame loki (Brush-footed trapdoor spider).